Reading from the N-terminus, the 627-residue chain is Zinc finger MYM-type protein 5 (627 aa).

The tract at residues 1 to 23 (MEAHLADMESSGGPTSSLAGTSR) is disordered. Positions 12 to 23 (GGPTSSLAGTSR) are enriched in polar residues. Lys59 is covalently cross-linked (Glycyl lysine isopeptide (Lys-Gly) (interchain with G-Cter in SUMO2)). The disordered stretch occupies residues 91 to 123 (DDEGDTDTNGGEEKNPTDFIEWGPNGNKSSTKN). Residues Lys137 and Lys195 each participate in a glycyl lysine isopeptide (Lys-Gly) (interchain with G-Cter in SUMO2) cross-link. Residues 234–268 (HLFCSTTCLSSFSHKRTRKTRNVMCKKDSPVRTTT) form an MYM-type 1 zinc finger. An MYM-type 2; degenerate zinc finger spans residues 280-319 (QGFYNASLSPYENCQSLRKEVFTKSRCIICNKLGEVRHEI). 2 consecutive MYM-type zinc fingers follow at residues 326–354 (HKLCSNNCFNEYRLTNGLIMNCCEQCSKY) and 370–396 (KRFCCQNCADEYKEIMEAKSKLLLLQN). The disordered stretch occupies residues 405 to 429 (ENEKRLRESSGTLSGNTGDIPEKKE). Glycyl lysine isopeptide (Lys-Gly) (interchain with G-Cter in SUMO2) cross-links involve residues Lys408, Lys427, and Lys517.

As to quaternary structure, interacts (via N-terminal 120 amino acid region) with ETV5 (via C-terminal).

The protein resides in the nucleus. Its function is as follows. Functions as a transcriptional regulator. This Mus musculus (Mouse) protein is Zinc finger MYM-type protein 5 (Zmym5).